A 355-amino-acid chain; its full sequence is 3-isopropylmalate dehydrogenase (355 aa).

Positions 90, 100, 128, and 222 each coordinate substrate. Mg(2+)-binding residues include Asp222, Asp246, and Asp250. 280–292 (GSAPDIAGKGVAN) lines the NAD(+) pocket.

Belongs to the isocitrate and isopropylmalate dehydrogenases family. LeuB type 1 subfamily. Homodimer. Requires Mg(2+) as cofactor. Mn(2+) serves as cofactor.

The protein resides in the cytoplasm. The enzyme catalyses (2R,3S)-3-isopropylmalate + NAD(+) = 4-methyl-2-oxopentanoate + CO2 + NADH. It participates in amino-acid biosynthesis; L-leucine biosynthesis; L-leucine from 3-methyl-2-oxobutanoate: step 3/4. Its function is as follows. Catalyzes the oxidation of 3-carboxy-2-hydroxy-4-methylpentanoate (3-isopropylmalate) to 3-carboxy-4-methyl-2-oxopentanoate. The product decarboxylates to 4-methyl-2 oxopentanoate. This Cupriavidus metallidurans (strain ATCC 43123 / DSM 2839 / NBRC 102507 / CH34) (Ralstonia metallidurans) protein is 3-isopropylmalate dehydrogenase.